We begin with the raw amino-acid sequence, 178 residues long: uncharacterized protein (178 aa).

Residues Met-1 to Asp-13 show a composition bias toward polar residues. 2 disordered regions span residues Met-1–Pro-24 and Trp-47–Lys-114.

This is an uncharacterized protein from Caenorhabditis elegans.